We begin with the raw amino-acid sequence, 76 residues long: Putative antitoxin VapB2 (76 aa).

It belongs to the UPF0330 family.

Functionally, possibly the antitoxin component of a type II toxin-antitoxin (TA) system. Its cognate toxin is VapC2 (Potential). In Pyrococcus abyssi (strain GE5 / Orsay), this protein is Putative antitoxin VapB2 (vapB2).